The primary structure comprises 144 residues: Large ribosomal subunit protein uL16 (144 aa).

The protein belongs to the universal ribosomal protein uL16 family. In terms of assembly, part of the 50S ribosomal subunit.

Its function is as follows. Binds 23S rRNA and is also seen to make contacts with the A and possibly P site tRNAs. This is Large ribosomal subunit protein uL16 from Enterococcus faecalis (strain ATCC 700802 / V583).